Reading from the N-terminus, the 635-residue chain is Transaminated amino acid decarboxylase (635 aa).

Lysine 588 participates in a covalent cross-link: Glycyl lysine isopeptide (Lys-Gly) (interchain with G-Cter in ubiquitin).

It belongs to the TPP enzyme family. The cofactor is Mg(2+). Requires thiamine diphosphate as cofactor.

The protein localises to the cytoplasm. The enzyme catalyses 4-methyl-2-oxopentanoate + H(+) = 3-methylbutanal + CO2. It carries out the reaction (S)-3-methyl-2-oxopentanoate + H(+) = 2-methylbutanal + CO2. It catalyses the reaction indole-3-pyruvate + H(+) = indole-3-acetaldehyde + CO2. The catalysed reaction is 3-phenylpyruvate + H(+) = 2-phenylacetaldehyde + CO2. The enzyme catalyses 4-methylsulfanyl-2-oxobutanoate + H(+) = 3-methylsulfanylpropanal + CO2. It carries out the reaction 3-(4-hydroxyphenyl)pyruvate + H(+) = (4-hydroxyphenyl)acetaldehyde + CO2. It participates in amino-acid degradation; Ehrlich pathway. In terms of biological role, one of five 2-oxo acid decarboxylases (PDC1, PDC5, PDC6, ARO10, and THI3) involved in amino acid catabolism. The enzyme catalyzes the decarboxylation of amino acids, which, in a first step, have been transaminated to the corresponding 2-oxo acids (alpha-keto-acids). In a third step, the resulting aldehydes are reduced to alcohols, collectively referred to as fusel oils or alcohols. Its preferred substrates are the transaminated amino acids derived from phenylalanine (phenylpyruvate), tryptophan (3-(indol-3-yl)pyruvate), and probably tyrosine (4-hydroxyphenylpyruvate), but also isoleucine ((3S)-3-methyl-2-oxopentanoate, also alpha-keto-beta-methylvalerate) and methionine (4-methylthio-2-oxobutanoate), whereas transaminated leucine (4-methyl-2-oxopentanoate, also alpha-keto-isocaproate) is a low efficiency substrate and transaminated valine and pyruvate are no substrates. In analogy to the pyruvate decarboxylases the enzyme may in a side-reaction catalyze condensation (or carboligation) reactions leading to the formation of 2-hydroxy ketone, collectively called acyloins. The sequence is that of Transaminated amino acid decarboxylase (ARO10) from Saccharomyces cerevisiae (strain ATCC 204508 / S288c) (Baker's yeast).